Consider the following 941-residue polypeptide: RNA-directed RNA polymerase (941 aa).

Residues 875-918 form a disordered region; the sequence is SARQGGMGLPPPPPPPLGGGGMAGPPPPPFMGLRPESSVPTSVP. A compositionally biased stretch (low complexity) spans 905 to 918; the sequence is MGLRPESSVPTSVP.

Forms a ribonucleoprotein complex with the 23S RNA, where a single polymerase molecule binds to a single viral RNA genome. Since the viral RNA is not encapsidated, ribonucleoprotein complex formation appears to be the strategy to survive in the host as persistent virus.

It localises to the host cytoplasm. It catalyses the reaction RNA(n) + a ribonucleoside 5'-triphosphate = RNA(n+1) + diphosphate. In terms of biological role, RNA-directed RNA polymerase that replicates the viral (+) and (-) genome. This chain is RNA-directed RNA polymerase, found in Saccharomyces 23S RNA narnavirus (ScNV-23S).